A 298-amino-acid polypeptide reads, in one-letter code: Glutamyl-Q tRNA(Asp) synthetase (298 aa).

L-glutamate-binding positions include 9–13 (RFAPS) and E45. The 'HIGH' region signature appears at 12–22 (PSPSGELHFGS). Residues C101, C103, Y115, and C119 each coordinate Zn(2+). L-glutamate-binding residues include Y172 and R190. The 'KMSKS' region motif lies at 228–232 (KLSKQ). K231 lines the ATP pocket.

It belongs to the class-I aminoacyl-tRNA synthetase family. GluQ subfamily. The cofactor is Zn(2+).

In terms of biological role, catalyzes the tRNA-independent activation of glutamate in presence of ATP and the subsequent transfer of glutamate onto a tRNA(Asp). Glutamate is transferred on the 2-amino-5-(4,5-dihydroxy-2-cyclopenten-1-yl) moiety of the queuosine in the wobble position of the QUC anticodon. This is Glutamyl-Q tRNA(Asp) synthetase from Salmonella typhi.